We begin with the raw amino-acid sequence, 115 residues long: Large ribosomal subunit protein uL22 (115 aa).

Belongs to the universal ribosomal protein uL22 family. Part of the 50S ribosomal subunit.

Functionally, this protein binds specifically to 23S rRNA; its binding is stimulated by other ribosomal proteins, e.g. L4, L17, and L20. It is important during the early stages of 50S assembly. It makes multiple contacts with different domains of the 23S rRNA in the assembled 50S subunit and ribosome. In terms of biological role, the globular domain of the protein is located near the polypeptide exit tunnel on the outside of the subunit, while an extended beta-hairpin is found that lines the wall of the exit tunnel in the center of the 70S ribosome. This Nitrosospira multiformis (strain ATCC 25196 / NCIMB 11849 / C 71) protein is Large ribosomal subunit protein uL22.